A 565-amino-acid chain; its full sequence is 4-coumarate--CoA ligase-like 2 (565 aa).

ATP-binding residues include Ser-221, Ser-222, Gly-223, Thr-224, Thr-225, and Lys-229. (E)-4-coumaroyl-AMP is bound at residue Phe-265. Lys-286 lines the CoA pocket. The SBD1 stretch occupies residues 288 to 359 (DMAKLLSAVE…ENYPKVKILQ (72 aa)). The (E)-4-coumaroyl-AMP site is built by Gly-337, Gln-359, Gly-360, and Thr-364. Residues Gln-359, Gly-360, Thr-364, Asp-445, and Arg-460 each coordinate ATP. The SBD2 stretch occupies residues 360–424 (GYGLTESTAI…IRSPTVMKGY (65 aa)). (E)-4-coumaroyl-AMP is bound by residues Lys-462 and Lys-466. CoA is bound at residue Gly-469. Lys-551 is an ATP binding site. Positions 563-565 (SKL) match the Microbody targeting signal motif.

This sequence belongs to the ATP-dependent AMP-binding enzyme family. Requires Mg(2+) as cofactor.

The protein localises to the peroxisome. It catalyses the reaction (E)-4-coumarate + ATP + CoA = (E)-4-coumaroyl-CoA + AMP + diphosphate. The enzyme catalyses (E)-4-coumarate + ATP + H(+) = (E)-4-coumaroyl-AMP + diphosphate. The catalysed reaction is (E)-4-coumaroyl-AMP + CoA = (E)-4-coumaroyl-CoA + AMP + H(+). Carboxylate--CoA ligase that may use 4-coumarate as substrate. Follows a two-step reaction mechanism, wherein the carboxylate substrate first undergoes adenylation by ATP, followed by a thioesterification in the presence of CoA to yield the final CoA thioester. The protein is 4-coumarate--CoA ligase-like 2 of Arabidopsis thaliana (Mouse-ear cress).